The chain runs to 211 residues: Thymidylate kinase (211 aa).

12 to 19 (GIDGSGKS) contacts ATP.

This sequence belongs to the thymidylate kinase family.

It carries out the reaction dTMP + ATP = dTDP + ADP. Phosphorylation of dTMP to form dTDP in both de novo and salvage pathways of dTTP synthesis. This is Thymidylate kinase from Ruegeria pomeroyi (strain ATCC 700808 / DSM 15171 / DSS-3) (Silicibacter pomeroyi).